Reading from the N-terminus, the 657-residue chain is Probable potassium transport system protein Kup 1 (657 aa).

Helical transmembrane passes span 40–60 (VTSGFWALTLGSIGVVFGDIG), 88–108 (VLSLILWALLIVVTAKYVLLL), 135–155 (WFLLALGVVGASMFIGDSMIT), 172–192 (PALEHYVVPLTVLILVLLFAV), 198–218 (ALVASAFGPVMVVWFTCIAVM), 241–261 (FLLSHGTIGLVTLGAVFLAVT), 282–302 (WMFFVLPSLLINYFGQGALVL), 320–340 (LVLPLVGLATAATVIASQAVI), 380–400 (LLLIGVMLLVLLFHTPSNLAS), 402–422 (YGIAVSTTMVADGIMGFVVIW), 432–452 (AAAVILPFVVVDMSFFSANLL), and 454–474 (LLEGAWVPLLFGAAMAGTIWT).

The protein belongs to the HAK/KUP transporter (TC 2.A.72) family.

It is found in the cell inner membrane. The enzyme catalyses K(+)(in) + H(+)(in) = K(+)(out) + H(+)(out). Transport of potassium into the cell. Likely operates as a K(+):H(+) symporter. The sequence is that of Probable potassium transport system protein Kup 1 from Bradyrhizobium diazoefficiens (strain JCM 10833 / BCRC 13528 / IAM 13628 / NBRC 14792 / USDA 110).